The primary structure comprises 265 residues: Type III pantothenate kinase (265 aa).

6–13 (DVGNTNIV) lines the ATP pocket. Substrate-binding positions include Y100 and 107–110 (GADR). Catalysis depends on D109, which acts as the Proton acceptor. Position 129 (D129) interacts with K(+). T132 contributes to the ATP binding site. T184 lines the substrate pocket.

Belongs to the type III pantothenate kinase family. As to quaternary structure, homodimer. The cofactor is NH4(+). Requires K(+) as cofactor.

The protein resides in the cytoplasm. It catalyses the reaction (R)-pantothenate + ATP = (R)-4'-phosphopantothenate + ADP + H(+). It functions in the pathway cofactor biosynthesis; coenzyme A biosynthesis; CoA from (R)-pantothenate: step 1/5. Its function is as follows. Catalyzes the phosphorylation of pantothenate (Pan), the first step in CoA biosynthesis. This is Type III pantothenate kinase from Alkaliphilus oremlandii (strain OhILAs) (Clostridium oremlandii (strain OhILAs)).